Reading from the N-terminus, the 220-residue chain is 2-dehydro-3-deoxy-phosphogluconate aldolase (220 aa).

The active-site Proton acceptor is the Glu-48. Residues Arg-52, Thr-76, and Lys-136 each coordinate pyruvate. Residue Lys-136 is the Schiff-base intermediate with substrate of the active site.

It belongs to the KHG/KDPG aldolase family. In terms of assembly, homotrimer.

It carries out the reaction 2-dehydro-3-deoxy-6-phospho-D-gluconate = D-glyceraldehyde 3-phosphate + pyruvate. Its pathway is carbohydrate acid metabolism; 2-dehydro-3-deoxy-D-gluconate degradation; D-glyceraldehyde 3-phosphate and pyruvate from 2-dehydro-3-deoxy-D-gluconate: step 2/2. Involved in the degradation of glucose via the Entner-Doudoroff pathway. Catalyzes the reversible, stereospecific retro-aldol cleavage of 2-keto-3-deoxy-6-phosphogluconate (KDPG) to pyruvate and D-glyceraldehyde-3-phosphate. This is 2-dehydro-3-deoxy-phosphogluconate aldolase (eda) from Pseudomonas aeruginosa (strain ATCC 15692 / DSM 22644 / CIP 104116 / JCM 14847 / LMG 12228 / 1C / PRS 101 / PAO1).